Here is a 379-residue protein sequence, read N- to C-terminus: Cytochrome b (379 aa).

Helical transmembrane passes span 33–53, 77–98, 113–133, and 178–198; these read FGSLLGMCLVIQILTGLFLAM, WLIRYLHANGASMFFICLFIHV, WNIGIILLLTTMATAFVGYVL, and FFAFHFILPFIITALVLVHLL. Residues His-83 and His-97 each contribute to the heme b site. Residues His-182 and His-196 each contribute to the heme b site. An a ubiquinone-binding site is contributed by His-201. The next 4 helical transmembrane spans lie at 226–246, 288–308, 320–340, and 347–367; these read IKDLLGIFLLLMTLMILALFF, LGGVLALVLSILILATFPLLN, ITQTIYWIFIANLLVLTWIGG, and FTTIGQIASITYFTIIVIIMP.

Belongs to the cytochrome b family. In terms of assembly, the cytochrome bc1 complex contains 11 subunits: 3 respiratory subunits (MT-CYB, CYC1 and UQCRFS1), 2 core proteins (UQCRC1 and UQCRC2) and 6 low-molecular weight proteins (UQCRH/QCR6, UQCRB/QCR7, UQCRQ/QCR8, UQCR10/QCR9, UQCR11/QCR10 and a cleavage product of UQCRFS1). This cytochrome bc1 complex then forms a dimer. The cofactor is heme b.

The protein localises to the mitochondrion inner membrane. Component of the ubiquinol-cytochrome c reductase complex (complex III or cytochrome b-c1 complex) that is part of the mitochondrial respiratory chain. The b-c1 complex mediates electron transfer from ubiquinol to cytochrome c. Contributes to the generation of a proton gradient across the mitochondrial membrane that is then used for ATP synthesis. The sequence is that of Cytochrome b (MT-CYB) from Deltamys kempi (Kemp's grass mouse).